The sequence spans 507 residues: Maturase K (507 aa).

It belongs to the intron maturase 2 family. MatK subfamily.

It localises to the plastid. Its subcellular location is the chloroplast. Usually encoded in the trnK tRNA gene intron. Probably assists in splicing its own and other chloroplast group II introns. The sequence is that of Maturase K from Lens ervoides (Beaded lentil).